The sequence spans 1134 residues: Mediator of RNA polymerase II transcription subunit 12 (1134 aa).

This sequence belongs to the Mediator complex subunit 12 family. In terms of assembly, component of the srb8-11 complex which consists of rb8, srb9(TRAP240), srb10 and srb11. The srb8-11 complex associates with the Mediator complex thereby blocking association with RNA polymerase II and leading to reduced transcriptional activation by Mediator.

It is found in the nucleus. In terms of biological role, component of the srb8-11 complex. The srb8-11 complex is a regulatory module of the Mediator complex which is itself involved in regulation of basal and activated RNA polymerase II-dependent transcription. The srb8-11 complex may be involved in the transcriptional repression of a subset of genes regulated by Mediator. It may inhibit the association of the Mediator complex with RNA polymerase II to form the holoenzyme complex. In Schizosaccharomyces pombe (strain 972 / ATCC 24843) (Fission yeast), this protein is Mediator of RNA polymerase II transcription subunit 12 (srb8).